A 140-amino-acid polypeptide reads, in one-letter code: Large ribosomal subunit protein uL14 (140 aa).

Belongs to the universal ribosomal protein uL14 family.

The sequence is that of Large ribosomal subunit protein uL14 (RpL23) from Drosophila melanogaster (Fruit fly).